A 332-amino-acid polypeptide reads, in one-letter code: GTP 3',8-cyclase (332 aa).

The region spanning 9–220 (GYNRRVDYLR…TQVRERIAER (212 aa)) is the Radical SAM core domain. GTP is bound at residue R18. Residues C25 and C29 each contribute to the [4Fe-4S] cluster site. Y31 provides a ligand contact to S-adenosyl-L-methionine. Residue C32 coordinates [4Fe-4S] cluster. Position 67 (R67) interacts with GTP. Residue G71 coordinates S-adenosyl-L-methionine. T98 provides a ligand contact to GTP. S122 lines the S-adenosyl-L-methionine pocket. K159 lines the GTP pocket. Residue M193 participates in S-adenosyl-L-methionine binding. [4Fe-4S] cluster contacts are provided by C258 and C261. 263-265 (RVR) lines the GTP pocket. C275 is a binding site for [4Fe-4S] cluster.

This sequence belongs to the radical SAM superfamily. MoaA family. Monomer and homodimer. [4Fe-4S] cluster is required as a cofactor.

It catalyses the reaction GTP + AH2 + S-adenosyl-L-methionine = (8S)-3',8-cyclo-7,8-dihydroguanosine 5'-triphosphate + 5'-deoxyadenosine + L-methionine + A + H(+). Its pathway is cofactor biosynthesis; molybdopterin biosynthesis. Its function is as follows. Catalyzes the cyclization of GTP to (8S)-3',8-cyclo-7,8-dihydroguanosine 5'-triphosphate. The protein is GTP 3',8-cyclase of Pseudomonas fluorescens (strain Pf0-1).